Here is a 129-residue protein sequence, read N- to C-terminus: Small ribosomal subunit protein uS11 (129 aa).

The protein belongs to the universal ribosomal protein uS11 family. Part of the 30S ribosomal subunit. Interacts with proteins S7 and S18. Binds to IF-3.

Its function is as follows. Located on the platform of the 30S subunit, it bridges several disparate RNA helices of the 16S rRNA. Forms part of the Shine-Dalgarno cleft in the 70S ribosome. The protein is Small ribosomal subunit protein uS11 of Limosilactobacillus fermentum (strain NBRC 3956 / LMG 18251) (Lactobacillus fermentum).